Consider the following 428-residue polypeptide: Putative POM121-like protein 1 (428 aa).

Disordered regions lie at residues 1-23 (MDSL…RLSP), 36-204 (KESG…KFPL), 254-293 (DCRP…HKSQ), 306-384 (TEVP…PSTL), and 402-428 (GPQP…SCPK). Residues 44–62 (EQDKDPRVQENPGDQRRVP) are compositionally biased toward basic and acidic residues. Residues 106 to 117 (QTSQTSWTSSCT) are compositionally biased toward low complexity. 5 stretches are compositionally biased toward polar residues: residues 118–129 (NRNAISSSYSST), 144–155 (SHCQLTLSSSKT), 260–269 (PSHTLSSLAT), 326–347 (FSSS…QVTS), and 403–415 (PQPQ…RGQN). Positions 416–428 (QRSQTSRTSSCPK) are enriched in low complexity.

Belongs to the POM121 family.

The chain is Putative POM121-like protein 1 (POM121L1P) from Homo sapiens (Human).